We begin with the raw amino-acid sequence, 1458 residues long: Secretory phospholipase A2 receptor (1458 aa).

Positions 1 to 23 (MLLSLLLLLLLGAPRRCTEGAAA) are cleaved as a signal peptide. Over 24 to 1393 (ALSPERVLKW…EHPGKGPSHS (1370 aa)) the chain is Extracellular. Intrachain disulfides connect Cys-49–Cys-62, Cys-87–Cys-104, Cys-176–Cys-202, Cys-190–Cys-217, Cys-258–Cys-352, Cys-328–Cys-344, Cys-404–Cys-499, Cys-476–Cys-491, Cys-615–Cys-632, Cys-697–Cys-794, Cys-772–Cys-786, Cys-838–Cys-935, Cys-912–Cys-927, Cys-1065–Cys-1085, Cys-1207–Cys-1221, Cys-1278–Cys-1373, and Cys-1350–Cys-1365. Residues 49–113 (CIQAGKSVLT…CDSTHVSLRW (65 aa)) form the Ricin B-type lectin domain. N-linked (GlcNAc...) asparagine glycosylation occurs at Asn-91. The region spanning 171–219 (AHGTPCMFPFQYNHQWHHECTREGRQDDSLWCATTSRYERDEKWGFCPD) is the Fibronectin type-II domain. 8 C-type lectin domains span residues 227-356 (CDAV…KKYL), 374-502 (TDCE…CKKP), 511-645 (SGCQ…KQPV), 660-798 (HPCY…KIPR), 815-939 (LFHQ…KRKT), 954-1098 (GTCP…EKIQ), 1117-1231 (LEYG…AICH), and 1243-1376 (ELCS…CKMK). 3 N-linked (GlcNAc...) asparagine glycosylation sites follow: Asn-408, Asn-431, and Asn-452. Residues 1394 to 1416 (IVPLAVALTLVVILAIITLSFYI) traverse the membrane as a helical segment. At 1417–1458 (YKQNKGFFRRLAGVGNSYYPTTNFSTIHLEENILISDLEKND) the chain is on the cytoplasmic side. Positions 1432–1438 (NSYYPTT) match the Endocytosis signal motif.

In terms of assembly, interacts with sPLA2-IB/PLA2G1B; this interaction mediates intracellular signaling as well as clearance of extracellular sPLA2-IB/PLA2G1B via endocytotic pathway. Interacts with sPLA2-X/PLA2G10; this interaction mediates sPLA2-X/PLA2G10 clearance and inactivation. In terms of processing, the secretory phospholipase A2 receptor form may be produced by the action of metalloproteinases. It contains all extracellular domains and only lacks transmembrane and cytosolic regions. It is however unclear whether this form is produced by proteolytic cleavage as suggested by some experiments, or by alternative splicing. Lung, skeletal muscle, brain, kidney and heart.

The protein localises to the cell membrane. It is found in the secreted. In terms of biological role, receptor for secretory phospholipase A2 (sPLA2). Also able to bind to snake PA2-like toxins. Although its precise function remains unclear, binding of sPLA2 to its receptor participates in both positive and negative regulation of sPLA2 functions as well as clearance of sPLA2. Binding of sPLA2-IB/PLA2G1B induces various effects depending on the cell type, such as activation of the mitogen-activated protein kinase (MAPK) cascade to induce cell proliferation, the production of lipid mediators, selective release of arachidonic acid in bone marrow-derived mast cells. In neutrophils, binding of sPLA2-IB/PLA2G1B can activate p38 MAPK to stimulate elastase release and cell adhesion. May be involved in responses in pro-inflammatory cytokine productions during endotoxic shock. Also has endocytic properties and rapidly internalizes sPLA2 ligands, which is particularly important for the clearance of extracellular sPLA2s to protect their potent enzymatic activities. The soluble secretory phospholipase A2 receptor form is circulating and acts as a negative regulator of sPLA2 functions by blocking the biological functions of sPLA2-IB/PLA2G1B and sPLA2-X/PLA2G10. The sequence is that of Secretory phospholipase A2 receptor (PLA2R1) from Oryctolagus cuniculus (Rabbit).